A 102-amino-acid polypeptide reads, in one-letter code: MGNIPLEHGLIVATILFALGFYGVMVRRNLLFMLMSLEIMMNAAALAFVLAGSVWAQPDGQIMFILILTLAAAEACIGLAIVLQFYHRFHHLDVDAASEMRG.

A run of 3 helical transmembrane segments spans residues 6–26 (LEHG…GVMV), 30–50 (LLFM…AFVL), and 62–82 (IMFI…LAIV).

The protein belongs to the complex I subunit 4L family. NDH-1 is composed of 14 different subunits. Subunits NuoA, H, J, K, L, M, N constitute the membrane sector of the complex.

Its subcellular location is the cell inner membrane. The enzyme catalyses a quinone + NADH + 5 H(+)(in) = a quinol + NAD(+) + 4 H(+)(out). In terms of biological role, NDH-1 shuttles electrons from NADH, via FMN and iron-sulfur (Fe-S) centers, to quinones in the respiratory chain. The immediate electron acceptor for the enzyme in this species is believed to be ubiquinone. Couples the redox reaction to proton translocation (for every two electrons transferred, four hydrogen ions are translocated across the cytoplasmic membrane), and thus conserves the redox energy in a proton gradient. The sequence is that of NADH-quinone oxidoreductase subunit K from Acinetobacter baylyi (strain ATCC 33305 / BD413 / ADP1).